A 606-amino-acid polypeptide reads, in one-letter code: Chaperone protein DnaK (606 aa).

Position 174 is a phosphothreonine; by autocatalysis (Thr-174). The tract at residues 578 to 606 is disordered; the sequence is YTQAGPQGGTNPGGQGGTDGNVNTDYKVY. A compositionally biased stretch (gly residues) spans 583 to 596; it reads PQGGTNPGGQGGTD.

It belongs to the heat shock protein 70 family.

Acts as a chaperone. The protein is Chaperone protein DnaK of Caldicellulosiruptor saccharolyticus (strain ATCC 43494 / DSM 8903 / Tp8T 6331).